We begin with the raw amino-acid sequence, 466 residues long: Transcription factor SOX-10 (466 aa).

Disordered regions lie at residues 1–67 (MAEE…DDDK), 160–198 (LRMQ…TDQG), 213–275 (DHRH…DFGN), 355–375 (QVKT…QPST), and 433–466 (RPLY…LSRP). Residues 23-32 (LSPSSAPSLG) are compositionally biased toward low complexity. Ser-24 is subject to Phosphoserine. Positions 62–102 (EADDDKFPVCIREAVSQVLSGYDWTLVPMPVRVNGASKSKP) are dimerization (DIM). Positions 104–172 (VKRPMNAFMV…QHKKDHPDYK (69 aa)) form a DNA-binding region, HMG box. Composition is skewed to basic and acidic residues over residues 160 to 173 (LRMQ…DYKY) and 254 to 271 (ADPK…KPHI). The transactivation domain (TAM) stretch occupies residues 228–310 (PEHPSGQSHG…LPPNGHPGHV (83 aa)). The segment at 353–466 (KAQVKTETTG…QPVYTTLSRP (114 aa)) is transactivation domain (TAC). Polar residues predominate over residues 440 to 466 (SDPSPSGPQSHSPTHWEQPVYTTLSRP).

In terms of assembly, monomer. Interacts with Armcx3 at the mitochondrial outer membrane surface. Interacts with PAX3. Predominant expression in glial cells of the nervous system.

It localises to the cytoplasm. It is found in the nucleus. Its subcellular location is the mitochondrion outer membrane. Transcription factor that plays a central role in developing and mature glia. Specifically activates expression of myelin genes, during oligodendrocyte (OL) maturation, such as DUSP15 and MYRF, thereby playing a central role in oligodendrocyte maturation and CNS myelination. Once induced, MYRF cooperates with SOX10 to implement the myelination program. Transcriptional activator of MITF, acting synergistically with PAX3. Transcriptional activator of MBP, via binding to the gene promoter. In Rattus norvegicus (Rat), this protein is Transcription factor SOX-10 (Sox10).